The sequence spans 405 residues: Macrolide efflux protein A (405 aa).

11 consecutive transmembrane segments (helical) span residues I14–F34, M48–V68, I76–M98, S145–W165, N168–V188, F222–F242, I259–G279, I285–L305, F310–V330, L350–A370, and I373–C393.

The protein belongs to the major facilitator superfamily. Drug:H(+) antiporter-3 (DHA3) (TC 2.A.1.21) family.

It localises to the cell membrane. In terms of biological role, confers resistance to 14-membered macrolides including erythromycin and to 15-membered macrolides but not to 16-membered macrolides, lincosamides or analogs of streptogramin B. May function as an efflux pump to regulate intracellular macrolide levels. The chain is Macrolide efflux protein A from Streptococcus pyogenes serotype M6 (strain ATCC BAA-946 / MGAS10394).